Consider the following 196-residue polypeptide: Cupin-domain-containing oxidoreductase srdD (196 aa).

The tract at residues 99-165 is cupin-like domain; sequence DFGPGVESPL…GNGTLPGRVM (67 aa).

This sequence belongs to the virC family.

Functionally, highly reducing polyketide synthase; part of the gene cluster that mediates the biosynthesis of sordarial, a salicylic aldehyde structurally related to the phytotoxin pyriculol. The most interesting aspect of this pathway is formation of an aromatic product from the highly reducing polyketide synthase srdA. SrdA synthesizes a reduced polyketide chain from one molecule of acetyl-CoA and five molecules of malonyl-CoA. The polyketide chain is then reductively released as an aldehyde. The oxidoreductases srdC, srdD and srdE then oxidize one of the hydroxy groups to facilitate the intramolecular aldol condensation, followed by dehydration to yield a salicylic aldehyde. This aldehyde can undergo facile reduction by endogenous reductases to yield the alcohol 1-hydroxy-2-hydroxymethyl-3-pent-1,3-dienylbenzene. The flavin-dependent srdI counteract against the propensity of the aldehydes to be reduced under physiological conditions and is responsible for reoxidizing 1-hydroxy-2-hydroxymethyl-3-pent-1,3-dienylbenzene back to the salicylic aldehyde. This salicylic aldehyde is then selectively epoxidized by the cupin-domain-containing oxidoreductase srdB to yield the epoxide, which can be hydrolyzed stereoselectively by the hydrolase srdG to give the final product sordarial. This is Cupin-domain-containing oxidoreductase srdD from Neurospora crassa (strain ATCC 24698 / 74-OR23-1A / CBS 708.71 / DSM 1257 / FGSC 987).